Consider the following 433-residue polypeptide: GTPase Der (433 aa).

EngA-type G domains lie at 5–167 (KKVL…GEVG) and 174–349 (IKVG…DQLE). GTP contacts are provided by residues 11–18 (GRPNVGKS), 58–62 (DTGGF), 119–122 (NKVD), 180–187 (GKPNSGKS), 227–231 (DTAGI), and 292–295 (SKWD). Residues 349 to 429 (ELKTSTPDLN…PILVELKEKI (81 aa)) enclose the KH-like domain.

This sequence belongs to the TRAFAC class TrmE-Era-EngA-EngB-Septin-like GTPase superfamily. EngA (Der) GTPase family. Associates with the 50S ribosomal subunit.

In terms of biological role, GTPase that plays an essential role in the late steps of ribosome biogenesis. The polypeptide is GTPase Der (Borreliella burgdorferi (strain ATCC 35210 / DSM 4680 / CIP 102532 / B31) (Borrelia burgdorferi)).